Consider the following 362-residue polypeptide: Anthranilate phosphoribosyltransferase 2 (362 aa).

5-phospho-alpha-D-ribose 1-diphosphate is bound by residues Gly-103, 106-107, Thr-111, 113-116, 131-139, and Ser-143; these read GD, NIST, and KHGNRSASS. Gly-103 lines the anthranilate pocket. A Mg(2+)-binding site is contributed by Ser-115. Asn-134 is a binding site for anthranilate. Anthranilate is bound at residue Arg-189. Positions 248 and 249 each coordinate Mg(2+).

This sequence belongs to the anthranilate phosphoribosyltransferase family. As to quaternary structure, homodimer. It depends on Mg(2+) as a cofactor.

The enzyme catalyses N-(5-phospho-beta-D-ribosyl)anthranilate + diphosphate = 5-phospho-alpha-D-ribose 1-diphosphate + anthranilate. The protein operates within amino-acid biosynthesis; L-tryptophan biosynthesis; L-tryptophan from chorismate: step 2/5. Its function is as follows. Catalyzes the transfer of the phosphoribosyl group of 5-phosphorylribose-1-pyrophosphate (PRPP) to anthranilate to yield N-(5'-phosphoribosyl)-anthranilate (PRA). The sequence is that of Anthranilate phosphoribosyltransferase 2 from Nostoc sp. (strain PCC 7120 / SAG 25.82 / UTEX 2576).